The primary structure comprises 246 residues: DNA repair protein RecO (246 aa).

Belongs to the RecO family.

Involved in DNA repair and RecF pathway recombination. The polypeptide is DNA repair protein RecO (Bifidobacterium adolescentis (strain ATCC 15703 / DSM 20083 / NCTC 11814 / E194a)).